Here is a 211-residue protein sequence, read N- to C-terminus: Adenylate kinase (211 aa).

Residue 10 to 15 (GSGKGT) participates in ATP binding. Residues 30–59 (STGDMLRAEVSKKSPLGLKAEEYMKQGLLV) are NMP. Residues T31, R36, 57-59 (LLV), 84-87 (GFPR), and Q91 contribute to the AMP site. An LID region spans residues 125–162 (GRRVCPKCGATYNIYYQKPKNDTLCDNDATPLIQRDDD). Residue R126 coordinates ATP. Zn(2+) contacts are provided by C129 and C132. 135 to 136 (TY) is an ATP binding site. Residues C149 and D152 each contribute to the Zn(2+) site. Positions 159 and 170 each coordinate AMP. An ATP-binding site is contributed by G198.

The protein belongs to the adenylate kinase family. As to quaternary structure, monomer.

The protein resides in the cytoplasm. It catalyses the reaction AMP + ATP = 2 ADP. It functions in the pathway purine metabolism; AMP biosynthesis via salvage pathway; AMP from ADP: step 1/1. Functionally, catalyzes the reversible transfer of the terminal phosphate group between ATP and AMP. Plays an important role in cellular energy homeostasis and in adenine nucleotide metabolism. This Hydrogenobaculum sp. (strain Y04AAS1) protein is Adenylate kinase.